The following is a 31-amino-acid chain: Cyclotide cter-C (31 aa).

The cyclopeptide (Gly-Asp) cross-link spans 1–31 (GVPCAESCVWIPCTVTALLGCSCKDKVCYLD). Cystine bridges form between C4–C21, C8–C23, and C13–C28.

Post-translationally, contains 3 disulfide bonds. In terms of processing, this is a cyclic peptide.

In terms of biological role, probably participates in a plant defense mechanism. This Clitoria ternatea (Butterfly pea) protein is Cyclotide cter-C.